The sequence spans 529 residues: Peptide chain release factor 3 (529 aa).

Residues 11 to 280 enclose the tr-type G domain; that stretch reads AKRRTFAIIS…GLVEWAPAPM (270 aa). Residues 20–27, 88–92, and 142–145 each bind GTP; these read SHPDAGKT, DTPGH, and NKLD.

This sequence belongs to the TRAFAC class translation factor GTPase superfamily. Classic translation factor GTPase family. PrfC subfamily.

The protein resides in the cytoplasm. Increases the formation of ribosomal termination complexes and stimulates activities of RF-1 and RF-2. It binds guanine nucleotides and has strong preference for UGA stop codons. It may interact directly with the ribosome. The stimulation of RF-1 and RF-2 is significantly reduced by GTP and GDP, but not by GMP. The polypeptide is Peptide chain release factor 3 (Shigella flexneri serotype 5b (strain 8401)).